Consider the following 317-residue polypeptide: Universal stress protein MT2052 (317 aa).

ATP-binding positions include glycine 13, 128–134 (GYRGQGA), 142–143 (SV), glycine 175, aspartate 208, 277–283 (GSHGRGG), and 291–293 (SVS).

This sequence belongs to the universal stress protein A family.

This chain is Universal stress protein MT2052, found in Mycobacterium tuberculosis (strain CDC 1551 / Oshkosh).